We begin with the raw amino-acid sequence, 314 residues long: Dihydropteroate synthase (314 aa).

A Pterin-binding domain is found at 10 to 294; sequence TVICGIINVT…DVASHRMAVE (285 aa). Asparagine 17 provides a ligand contact to Mg(2+). Residues aspartate 91, asparagine 110, aspartate 201, lysine 237, and 282–284 each bind (7,8-dihydropterin-6-yl)methyl diphosphate; that span reads RVH.

Belongs to the DHPS family. In terms of assembly, homodimer. Mg(2+) serves as cofactor.

The enzyme catalyses (7,8-dihydropterin-6-yl)methyl diphosphate + 4-aminobenzoate = 7,8-dihydropteroate + diphosphate. The protein operates within cofactor biosynthesis; tetrahydrofolate biosynthesis; 7,8-dihydrofolate from 2-amino-4-hydroxy-6-hydroxymethyl-7,8-dihydropteridine diphosphate and 4-aminobenzoate: step 1/2. Is potently inhibited by sulfonamides, with Ki values between 25 nM and 850 nM. Functionally, catalyzes the condensation of para-aminobenzoate (pABA) with 6-hydroxymethyl-7,8-dihydropterin diphosphate (DHPt-PP) to form 7,8-dihydropteroate, the immediate precursor of folate derivatives. Is the target for the sulfonamide group of antimicrobial drugs. Sulfonamide drugs act as pABA analogs, they inhibit the reaction by acting as alternative substrates, leading to a 'dead end' sulfa-pterin product. This chain is Dihydropteroate synthase (sulA), found in Streptococcus pneumoniae (strain ATCC BAA-255 / R6).